A 212-amino-acid chain; its full sequence is Prolactin (212 aa).

The signal sequence occupies residues 1 to 24; it reads MAHRETNGSKLFITVLCMVAACSA. Cystine bridges form between cysteine 70–cysteine 185 and cysteine 202–cysteine 212.

Belongs to the somatotropin/prolactin family.

The protein localises to the secreted. This Sparus aurata (Gilthead sea bream) protein is Prolactin (prl).